Here is a 268-residue protein sequence, read N- to C-terminus: Leucyl/phenylalanyl-tRNA--protein transferase (268 aa).

It belongs to the L/F-transferase family.

Its subcellular location is the cytoplasm. It carries out the reaction N-terminal L-lysyl-[protein] + L-leucyl-tRNA(Leu) = N-terminal L-leucyl-L-lysyl-[protein] + tRNA(Leu) + H(+). It catalyses the reaction N-terminal L-arginyl-[protein] + L-leucyl-tRNA(Leu) = N-terminal L-leucyl-L-arginyl-[protein] + tRNA(Leu) + H(+). The enzyme catalyses L-phenylalanyl-tRNA(Phe) + an N-terminal L-alpha-aminoacyl-[protein] = an N-terminal L-phenylalanyl-L-alpha-aminoacyl-[protein] + tRNA(Phe). Functions in the N-end rule pathway of protein degradation where it conjugates Leu, Phe and, less efficiently, Met from aminoacyl-tRNAs to the N-termini of proteins containing an N-terminal arginine or lysine. This chain is Leucyl/phenylalanyl-tRNA--protein transferase, found in Zymomonas mobilis subsp. mobilis (strain ATCC 31821 / ZM4 / CP4).